The following is a 445-amino-acid chain: Chromosomal replication initiator protein DnaA (445 aa).

Residues 1–73 form a domain I, interacts with DnaA modulators region; that stretch reads MSTHLTETWE…VNALKLLTSK (73 aa). The segment at 73 to 106 is domain II; it reads KKYNIDFIVTTEEKIEKNHNNEKSNIVVNDEMST. Residues 107–323 are domain III, AAA+ region; it reads MLNPKYTFDS…GALIRIVAFS (217 aa). ATP contacts are provided by Gly151, Gly153, Lys154, and Thr155. The segment at 324–445 is domain IV, binds dsDNA; the sequence is SLTNKEISVD…NDLNKRINQK (122 aa).

This sequence belongs to the DnaA family. Oligomerizes as a right-handed, spiral filament on DNA at oriC.

It localises to the cytoplasm. In terms of biological role, plays an essential role in the initiation and regulation of chromosomal replication. ATP-DnaA binds to the origin of replication (oriC) to initiate formation of the DNA replication initiation complex once per cell cycle. Binds the DnaA box (a 9 base pair repeat at the origin) and separates the double-stranded (ds)DNA. Forms a right-handed helical filament on oriC DNA; dsDNA binds to the exterior of the filament while single-stranded (ss)DNA is stabiized in the filament's interior. The ATP-DnaA-oriC complex binds and stabilizes one strand of the AT-rich DNA unwinding element (DUE), permitting loading of DNA polymerase. After initiation quickly degrades to an ADP-DnaA complex that is not apt for DNA replication. Binds acidic phospholipids. This Clostridium botulinum (strain Loch Maree / Type A3) protein is Chromosomal replication initiator protein DnaA.